Consider the following 588-residue polypeptide: 2-succinyl-5-enolpyruvyl-6-hydroxy-3-cyclohexene-1-carboxylate synthase (588 aa).

Positions 1–22 are disordered; the sequence is MTTTGSLPAQPSSTSPRTGNPS.

This sequence belongs to the TPP enzyme family. MenD subfamily. In terms of assembly, homodimer. Mg(2+) serves as cofactor. Mn(2+) is required as a cofactor. Requires thiamine diphosphate as cofactor.

The catalysed reaction is isochorismate + 2-oxoglutarate + H(+) = 5-enolpyruvoyl-6-hydroxy-2-succinyl-cyclohex-3-ene-1-carboxylate + CO2. The protein operates within quinol/quinone metabolism; 1,4-dihydroxy-2-naphthoate biosynthesis; 1,4-dihydroxy-2-naphthoate from chorismate: step 2/7. It functions in the pathway quinol/quinone metabolism; menaquinone biosynthesis. Catalyzes the thiamine diphosphate-dependent decarboxylation of 2-oxoglutarate and the subsequent addition of the resulting succinic semialdehyde-thiamine pyrophosphate anion to isochorismate to yield 2-succinyl-5-enolpyruvyl-6-hydroxy-3-cyclohexene-1-carboxylate (SEPHCHC). This Clavibacter michiganensis subsp. michiganensis (strain NCPPB 382) protein is 2-succinyl-5-enolpyruvyl-6-hydroxy-3-cyclohexene-1-carboxylate synthase.